An 852-amino-acid polypeptide reads, in one-letter code: RNA-binding protein 10 (852 aa).

Basic and acidic residues-rich tracts occupy residues 1-14 (MEYE…DRTG) and 21-45 (RSQD…RSYP). The segment at 1–78 (MEYERRGGRG…RGQLQSHGVQ (78 aa)) is disordered. The RRM 1 domain occupies 37-132 (RDMDYRSYPR…QKVSMHYSDP (96 aa)). Phosphoserine is present on Ser-61. Residues 135–165 (KINEDWLCNKCGVQNFKRREKCFKCGVPKSE) form a RanBP2-type zinc finger. An RRM 2 domain is found at 223-307 (DTIILRNLNP…KTINVEFAKG (85 aa)). Position 306 is an N6-acetyllysine (Lys-306). 6 disordered regions span residues 343–365 (GGES…QQDE), 386–410 (KGPG…EGGT), 426–446 (APGL…ATNS), 459–489 (SELQ…YPVP), 542–568 (EQSA…HKTK), and 634–675 (DLPK…EEKL). Positions 430 to 446 (YQQSAEGSSGQGTATNS) are enriched in polar residues. A compositionally biased stretch (low complexity) spans 463-484 (SPTHPSSALPPATSPTAPESYS). A compositionally biased stretch (basic and acidic residues) spans 545 to 561 (ADGHKDTGASSKEGKEK). A phosphoserine mark is found at Ser-640, Ser-645, Ser-655, Ser-658, and Ser-660. Over residues 665-675 (ERGGPEREEKL) the composition is skewed to basic and acidic residues. The segment at 681 to 706 (LACLLCRRQFPSKEALIRHQQLSGLH) adopts a C2H2-type; atypical zinc-finger fold. 3 positions are modified to phosphoserine: Ser-703, Ser-719, and Ser-767. The segment at 740 to 783 (AAERREKYGIPEPPEPKRRKYGGISTASVDFEQPTRDGLGSDNI) is disordered. The region spanning 780-826 (SDNIGSRMLQAMGWKEGSGLGRKKQGIVTPIEAQTRVRGSGLGARGS) is the G-patch domain. Arg-824 is subject to Omega-N-methylarginine.

As to quaternary structure, associates with the spliceosome. Component of a large chromatin remodeling complex, at least composed of MYSM1, PCAF, RBM10 and KIF11/TRIP5.

Its subcellular location is the nucleus. Its function is as follows. Binds to ssRNA containing the consensus sequence 5'-AGGUAA-3'. May be involved in post-transcriptional processing, most probably in mRNA splicing. Binds to RNA homopolymers, with a preference for poly(G) and poly(U) and little for poly(A). May bind to specific miRNA hairpins. This Rattus norvegicus (Rat) protein is RNA-binding protein 10.